The sequence spans 875 residues: Neurotrypsin (875 aa).

A signal peptide spans 1-20 (MTLARFVLALMLGALPEVVG). Residue asparagine 26 is glycosylated (N-linked (GlcNAc...) asparagine). The tract at residues 29 to 88 (LHHSHRHSPPPGPHYPYYLPTQQRPPRTRPPPPLPRFPRPPRALPAQRPHALQAGHTPRP) is disordered. Residues 43–53 (YPYYLPTQQRP) are compositionally biased toward low complexity. Positions 56-71 (TRPPPPLPRFPRPPRA) are enriched in pro residues. The Kringle domain occupies 93–165 (CPAGEPWVSV…GKVDWGYCDC (73 aa)). Intrachain disulfides connect cysteine 93-cysteine 165, cysteine 109-cysteine 149, cysteine 138-cysteine 163, cysteine 195-cysteine 259, cysteine 208-cysteine 269, cysteine 239-cysteine 249, cysteine 305-cysteine 369, cysteine 318-cysteine 379, cysteine 349-cysteine 359, cysteine 412-cysteine 475, cysteine 425-cysteine 485, cysteine 455-cysteine 465, cysteine 525-cysteine 589, cysteine 538-cysteine 599, cysteine 569-cysteine 579, cysteine 619-cysteine 750, cysteine 661-cysteine 677, cysteine 765-cysteine 831, cysteine 794-cysteine 808, and cysteine 821-cysteine 850. SRCR domains lie at 170–271 (VRLR…TCSF), 280–381 (IRLA…SCTP), 387–487 (IRLA…ACYP), and 500–601 (VRLV…ICDY). Residues 619 to 630 (CGLRLLHRRQKR) are zymogen activation region. The 244-residue stretch at 631–874 (IIGGKNSLRG…FVPWIKSVTK (244 aa)) folds into the Peptidase S1 domain. The active-site Charge relay system is histidine 676. A glycan (N-linked (GlcNAc...) asparagine) is linked at asparagine 683. Aspartate 726 acts as the Charge relay system in catalysis. The active-site Charge relay system is the serine 825.

The protein belongs to the peptidase S1 family.

It localises to the secreted. Its function is as follows. Plays a role in neuronal plasticity and the proteolytic action may subserve structural reorganizations associated with learning and memory operations. This Pan troglodytes (Chimpanzee) protein is Neurotrypsin (PRSS12).